The sequence spans 65 residues: Large ribosomal subunit protein bL35 (65 aa).

Positions M1–K26 are disordered.

This sequence belongs to the bacterial ribosomal protein bL35 family.

In Clostridium beijerinckii (strain ATCC 51743 / NCIMB 8052) (Clostridium acetobutylicum), this protein is Large ribosomal subunit protein bL35.